A 248-amino-acid chain; its full sequence is Triosephosphate isomerase (248 aa).

Residue 14-16 (NWK) participates in substrate binding. H99 functions as the Electrophile in the catalytic mechanism. E170 functions as the Proton acceptor in the catalytic mechanism. Substrate is bound by residues G176, S212, and 233 to 234 (GG).

The protein belongs to the triosephosphate isomerase family. Homodimer.

It localises to the cytoplasm. It catalyses the reaction D-glyceraldehyde 3-phosphate = dihydroxyacetone phosphate. The protein operates within carbohydrate biosynthesis; gluconeogenesis. It functions in the pathway carbohydrate degradation; glycolysis; D-glyceraldehyde 3-phosphate from glycerone phosphate: step 1/1. Functionally, involved in the gluconeogenesis. Catalyzes stereospecifically the conversion of dihydroxyacetone phosphate (DHAP) to D-glyceraldehyde-3-phosphate (G3P). This Bordetella bronchiseptica (strain ATCC BAA-588 / NCTC 13252 / RB50) (Alcaligenes bronchisepticus) protein is Triosephosphate isomerase.